The chain runs to 981 residues: Helicase-like transcription factor CHR28 (981 aa).

2 disordered regions span residues 1–66 (MDSA…LDSR) and 112–194 (KRTH…RNSE). Residues 46-65 (SGSSSGANGHTKTGLTNLDS) are compositionally biased toward polar residues. Residues 119 to 128 (FSRPPFPPRP) are compositionally biased toward pro residues. The span at 166–176 (HGTSASPSHFN) shows a compositional bias: polar residues. Positions 181-194 (PMHRNGIGEERNSE) are enriched in basic and acidic residues. A Helicase ATP-binding domain is found at 241-526 (ETNSLHCMGG…YSYFRFLKYD (286 aa)). ATP is bound at residue 254-261 (DDQGLGKT). 2 disordered regions span residues 293–337 (DADD…RKFN) and 439–462 (VVGTTKKSKKKKGNNNAGDSSDPD). Over residues 439 to 451 (VVGTTKKSKKKKG) the composition is skewed to basic residues. An RING-type; degenerate zinc finger spans residues 679–718 (CCVCHDPPEDPVVTLCGHIFCYQCVSDYITGDEDTCPAPR). The span at 779–798 (NQGTSNSTQNGQMASSSQQP) shows a compositional bias: polar residues. Residues 779–808 (NQGTSNSTQNGQMASSSQQPNDDDDDDDDD) form a disordered region. Acidic residues predominate over residues 799-808 (NDDDDDDDDD). The Helicase C-terminal domain occupies 804 to 976 (DDDDDVTIVE…ATRLTVDDLK (173 aa)).

Belongs to the SNF2/RAD54 helicase family. RAD16 subfamily. In terms of assembly, interacts with SUVR2.

It localises to the nucleus. In terms of biological role, probable helicase-like transcription factor involved in transcriptional gene silencing. Associates with SUVR2 and contributes to transcriptional gene silencing at RNA-directed DNA methylation (RdDM) target loci but also at RdDM-independent target loci. May be involved in nucleosome positioning to form ordered nucleosome arrays on chromatin. Associates with SUVR2 and functions redundantly with FRG1. Required for the efficient methylation of a broad range of RdDM target loci. This Arabidopsis thaliana (Mouse-ear cress) protein is Helicase-like transcription factor CHR28.